The sequence spans 377 residues: Alternative oxidase, mitochondrial (377 aa).

The helical transmembrane segment at 149–169 threads the bilayer; sequence LSRFIFLESIAAVPGMVAGML. Positions 156, 195, and 198 each coordinate Fe cation. A helical membrane pass occupies residues 214-234; the sequence is ILIIGAQGVYFNAMFVAYLIS. Fe cation-binding residues include glutamate 246, glutamate 303, and histidine 306.

This sequence belongs to the alternative oxidase family. Requires Fe cation as cofactor.

The protein localises to the mitochondrion inner membrane. Its function is as follows. Catalyzes cyanide-resistant oxygen consumption. May increase respiration when the cytochrome respiratory pathway is restricted, or in response to low temperatures. The sequence is that of Alternative oxidase, mitochondrial (AOX1) from Pyricularia oryzae (strain 70-15 / ATCC MYA-4617 / FGSC 8958) (Rice blast fungus).